The primary structure comprises 341 residues: Delta(1)-pyrroline-2-carboxylate/Delta(1)-piperideine-2-carboxylate reductase (341 aa).

Catalysis depends on S52, which acts as the Charge relay system. H53 (proton donor) is an active-site residue. R57 serves as a coordination point for substrate. An NADP(+)-binding site is contributed by 125-129 (HFAAL). T165 lines the substrate pocket. 183-185 (DMA) provides a ligand contact to NADP(+). Substrate is bound at residue 191-192 (HG). D193 serves as the catalytic Charge relay system. Residues 235–236 (HK) and 308–314 (RMPGERR) each bind NADP(+).

The protein belongs to the LDH2/MDH2 oxidoreductase family. In terms of assembly, homodimer.

The enzyme catalyses L-pipecolate + NADP(+) = Delta(1)-piperideine-2-carboxylate + NADPH + H(+). It catalyses the reaction L-proline + NADP(+) = 1-pyrroline-2-carboxylate + NADPH + H(+). It carries out the reaction N-methyl-L-alanine + NADP(+) + H2O = methylamine + pyruvate + NADPH + H(+). With respect to regulation, is inhibited by the substrate analog pyrrole-2-carboxylate, but not by N-formylphenylalanine. Its function is as follows. Catalyzes the reduction of both Delta(1)-pyrroline-2-carboxylate (Pyr2C) and Delta(1)-piperideine-2-carboxylate (Pip2C) to L-proline and L-pipecolate, respectively, using NADPH as the electron donor. Can use NADH instead of NADPH, although with much less efficiency. Plays an essential role in the catabolism of D-proline and D-lysine, which allows P.putida to grow on each of these amino-acids as a sole carbon source; D-lysine appears to be catabolized only through the pipecolate pathway. Can also catalyze the reverse oxidation reactions, albeit at a much lower rate. To a lesser extent, is able to catalyze in vitro the NADPH-dependent formation of N-alkyl-L-amino acids from the corresponding alpha-oxo acids and alkylamines, e.g. the formation of N-methylalanine from pyruvate and N-methylamine; cannot use ammonia as substrate for these reductive amination reactions. Shows neither malate dehydrogenase nor lactate dehydrogenase activity. The polypeptide is Delta(1)-pyrroline-2-carboxylate/Delta(1)-piperideine-2-carboxylate reductase (Pseudomonas putida (Arthrobacter siderocapsulatus)).